We begin with the raw amino-acid sequence, 231 residues long: NADH-ubiquinone oxidoreductase chain 4 (231 aa).

A run of 6 helical transmembrane segments spans residues Pro1 to Ile21, Thr34 to Leu54, Ser61 to Ile80, Trp84 to Leu106, Ile118 to Leu138, and Leu156 to Leu178.

This sequence belongs to the complex I subunit 4 family.

It localises to the mitochondrion membrane. The enzyme catalyses a ubiquinone + NADH + 5 H(+)(in) = a ubiquinol + NAD(+) + 4 H(+)(out). Its function is as follows. Core subunit of the mitochondrial membrane respiratory chain NADH dehydrogenase (Complex I) that is believed to belong to the minimal assembly required for catalysis. Complex I functions in the transfer of electrons from NADH to the respiratory chain. The immediate electron acceptor for the enzyme is believed to be ubiquinone. The protein is NADH-ubiquinone oxidoreductase chain 4 (MT-ND4) of Trimeresurus albolabris (White-lipped pit viper).